The chain runs to 84 residues: Beta-defensin 119 (84 aa).

The N-terminal stretch at 1–21 (MKFLFLFLAILLATKIPVISG) is a signal peptide. 3 disulfides stabilise this stretch: cysteine 28-cysteine 55, cysteine 35-cysteine 49, and cysteine 39-cysteine 56.

It belongs to the beta-defensin family.

It is found in the secreted. In terms of biological role, has antibacterial activity. In Macaca fascicularis (Crab-eating macaque), this protein is Beta-defensin 119 (DEFB119).